A 149-amino-acid chain; its full sequence is uncharacterized protein (149 aa).

Over residues 1–15 (MQRQTGHMEDKKRTG) the composition is skewed to basic and acidic residues. The tract at residues 1 to 32 (MQRQTGHMEDKKRTGLESQGTENAFSDGRDGK) is disordered.

This is an uncharacterized protein from Gallus gallus (Chicken).